A 399-amino-acid chain; its full sequence is MAKEKFNRTKPHVNIGTIGHVDHGKTTLSAAISAVLSLKGLAEMKDYDNIDNAPEEKERGITIATSHIEYETENRHYAHVDCPGHADYVKNMITGAAQMDGAILVVSAADGPMPQTREHILLSRQVGVPHIVVFLNKQDMVDDQELLELVEMEVRELLSAYEFPGDDTPIIAGSALRALKKAKAGNVGEWGEKVLKLMAEVDAYIPTPKRDTEKTFLMPVEDVFSIAGRGTVVTGRIERGVVKVGDEVEIVGIRATQKTTVTGVEMFRKELEKGEAGDNVGVLLRGTKKEEVERGMVLCKPGSITPHKKFEGEIYVLSKEEGGRHTPFFTNYRPQFYVRTTDVTGSITLPEGVEMVMPGDNVKITVELISPVALELGTKFAIREGGRTVGAGVVSNIIE.

Positions 10–209 constitute a tr-type G domain; it reads KPHVNIGTIG…EVDAYIPTPK (200 aa). A G1 region spans residues 19–26; the sequence is GHVDHGKT. 19 to 26 lines the GTP pocket; the sequence is GHVDHGKT. Residue threonine 26 coordinates Mg(2+). The segment at 60 to 64 is G2; it reads GITIA. Residues 81-84 are G3; it reads DCPG. GTP contacts are provided by residues 81 to 85 and 136 to 139; these read DCPGH and NKQD. A G4 region spans residues 136–139; that stretch reads NKQD. The segment at 174-176 is G5; the sequence is SAL.

It belongs to the TRAFAC class translation factor GTPase superfamily. Classic translation factor GTPase family. EF-Tu/EF-1A subfamily. Monomer.

Its subcellular location is the cytoplasm. The enzyme catalyses GTP + H2O = GDP + phosphate + H(+). In terms of biological role, GTP hydrolase that promotes the GTP-dependent binding of aminoacyl-tRNA to the A-site of ribosomes during protein biosynthesis. The sequence is that of Elongation factor Tu from Helicobacter pylori (strain P12).